Reading from the N-terminus, the 354-residue chain is Probable glucan endo-1,3-beta-glucosidase BG5 (354 aa).

The first 30 residues, 1–30 (MLYLPKKLFLFFFSCIVVIVNYNNSDFVNA), serve as a signal peptide directing secretion. Glu-137 acts as the Proton donor in catalysis. The active-site Nucleophile is Glu-276. N-linked (GlcNAc...) asparagine glycosylation is present at Asn-286.

The protein belongs to the glycosyl hydrolase 17 family.

The protein localises to the secreted. It catalyses the reaction Hydrolysis of (1-&gt;3)-beta-D-glucosidic linkages in (1-&gt;3)-beta-D-glucans.. Its function is as follows. May play a role in plant defense against pathogens. This Arabidopsis thaliana (Mouse-ear cress) protein is Probable glucan endo-1,3-beta-glucosidase BG5.